A 1064-amino-acid polypeptide reads, in one-letter code: Alpha-aminoadipic semialdehyde synthase (1064 aa).

The lysine-ketoglutarate reductase stretch occupies residues 24-445 (VNKWERRTPL…RACISYRGEL (422 aa)). Thr-238 carries the phosphothreonine modification. Ser-458 is subject to Phosphoserine. Residues 583 to 1064 (MTKKSGVLIL…YGIKLMEKAE (482 aa)) are saccharopine dehydrogenase. L-saccharopine is bound by residues 703–704 (SY), Asp-730, Arg-830, and 852–854 (TLR). 729–731 (LDP) provides a ligand contact to NADP(+).

It in the N-terminal section; belongs to the AlaDH/PNT family. This sequence in the C-terminal section; belongs to the saccharopine dehydrogenase family. Homodimer. Post-translationally, phosphorylation of Ser-458 seems important for the LKR activity. In terms of tissue distribution, ubiquitous, with higher levels in flowers. Isoform Long is mostly present in young leaves, cotyledons, root tips and mature root parts. Whereas isoform Short is mostly expressed in cotyledons and at low levels in all root parts.

The protein localises to the cytoplasm. The catalysed reaction is L-saccharopine + NADP(+) + H2O = L-lysine + 2-oxoglutarate + NADPH + H(+). It catalyses the reaction L-saccharopine + NAD(+) + H2O = (S)-2-amino-6-oxohexanoate + L-glutamate + NADH + H(+). It functions in the pathway amino-acid degradation; L-lysine degradation via saccharopine pathway; glutaryl-CoA from L-lysine: step 1/6. The protein operates within amino-acid degradation; L-lysine degradation via saccharopine pathway; glutaryl-CoA from L-lysine: step 2/6. Its activity is regulated as follows. The LKR activity is stimulated by NaCl. In terms of biological role, bifunctional enzyme that catalyzes the first two steps in lysine degradation. The N-terminal and the C-terminal contain lysine-oxoglutarate reductase and saccharopine dehydrogenase activity, respectively. Negatively regulates free Lys accumulation in seeds. The chain is Alpha-aminoadipic semialdehyde synthase (LKR/SDH) from Arabidopsis thaliana (Mouse-ear cress).